A 361-amino-acid chain; its full sequence is tRNA pseudouridine synthase D (361 aa).

Asp-76 acts as the Nucleophile in catalysis. The TRUD domain maps to 151–318; sequence GIPNYFGYQR…EQGSRRLAWI (168 aa).

The protein belongs to the pseudouridine synthase TruD family.

The catalysed reaction is uridine(13) in tRNA = pseudouridine(13) in tRNA. Functionally, responsible for synthesis of pseudouridine from uracil-13 in transfer RNAs. The polypeptide is tRNA pseudouridine synthase D (Wolinella succinogenes (strain ATCC 29543 / DSM 1740 / CCUG 13145 / JCM 31913 / LMG 7466 / NCTC 11488 / FDC 602W) (Vibrio succinogenes)).